A 141-amino-acid polypeptide reads, in one-letter code: Putative nickel-responsive regulator (141 aa).

Positions 80, 91, 93, and 99 each coordinate Ni(2+).

It belongs to the transcriptional regulatory CopG/NikR family. Ni(2+) is required as a cofactor.

Its function is as follows. Transcriptional regulator. In Methanococcus maripaludis (strain C6 / ATCC BAA-1332), this protein is Putative nickel-responsive regulator.